The sequence spans 238 residues: 1-(5-phosphoribosyl)-5-[(5-phosphoribosylamino)methylideneamino] imidazole-4-carboxamide isomerase (238 aa).

Aspartate 8 acts as the Proton acceptor in catalysis. Catalysis depends on aspartate 129, which acts as the Proton donor.

This sequence belongs to the HisA/HisF family.

The protein resides in the cytoplasm. It catalyses the reaction 1-(5-phospho-beta-D-ribosyl)-5-[(5-phospho-beta-D-ribosylamino)methylideneamino]imidazole-4-carboxamide = 5-[(5-phospho-1-deoxy-D-ribulos-1-ylimino)methylamino]-1-(5-phospho-beta-D-ribosyl)imidazole-4-carboxamide. Its pathway is amino-acid biosynthesis; L-histidine biosynthesis; L-histidine from 5-phospho-alpha-D-ribose 1-diphosphate: step 4/9. This Anaeromyxobacter dehalogenans (strain 2CP-1 / ATCC BAA-258) protein is 1-(5-phosphoribosyl)-5-[(5-phosphoribosylamino)methylideneamino] imidazole-4-carboxamide isomerase.